A 1270-amino-acid polypeptide reads, in one-letter code: MAVIKKGARRKDVKEPKKRSAKIKKATFDANKKKEVGVSDLTLLSKISDESINENLKKRFKNGIIYTYIGHVLISVNPFRDLGIYTNAVLESYKGKNRLEVPPHVFAIAESMYYNLKSYNENQCVIISGESGAGKTEAAKRIMQYIAAASNSHSESIGKIKDMVLATNPLLESFGCAKTLRNNNSSRHGKYLEIKFNSQFEPCAGNITNYLLEKQRVVSQIKNERNFHIFYQFTKGASDTYRQMFGVQMPEQYIYTAAAGCTTADTIDDVKDYEGTLEAMRTIGLVQEEQDQIFRMLAAILWIGNISFIENEEGNAQVGDTSVTDFVAYLLQVDASLLVKCLVERIMQTSHGMKRGSVYHVPLNPVQATAVRDALAKAIYNNLFDWIVDRVNVSLQAFPGADKSIGILDIYGFEIFEHNSFEQICINYVNEKLQQIFIQLTLKAEQETYEREKIKWTPIKYFDNKVVCDLIEAKNPPGILAAMNDSIATAHADSNAADQAFAQRLNLFNSNPYFELRANKFVIKHYAGDVTYDINGITDKNKDQLQKDLIELIGTTTNTFLSTIFPDDVDKDSKRRPPTAGDKIIKSANELVETLSKAEPSYIRTIKPNQTKSPNDYDDHQVLHQVKYLGLQENVRIRRAGFAYRQTFEKFVERFYLLSPDCSYAGDYTWDGDTLEAVKLILRDAMIPEKEFQLGVTSVFIKTPESLFALEDMRDKYWYNMAARIQRAWRRFLQRRIDAAIKIQRTIREKKGGNKYVKLRDYGTKLLAGKKERRSMSLLGYRAFMGDYLSCNESKTKGSYIRRQVGIKDKVVFSIKGECLHSKFGRSAQRLKKVFILTKKTFYIIGQTREQNAMKYTQDYKIDVGKIKQVSLTNLQDDWMGVILVNSTQPDPLINTPFKTELMTRLKKLNEKIMIKVGPTIEYHKQPNKLHTVRSKISDSAPKYGDIYKSSTIYVRRGHPANSKSNKKPKNPGGLSGKPIKSKKSKHKSTHKHTHSHRSHRDAAKKQPLPSQKPVNPLSLAATAAQAAYNPKPDKTVPIKSSAIPAAKVSSKHSSKPSSKEKVAVKKASSSHKSSSAKQNQVSMPPSKGVEKNKEPLKETTATANIPIPPPPPPMGQPKDPKFEAAYDFPGSGSSSELPLKKGDIVFISRDEPSGWSLAKLLDGSKEGWVPTAYMTPYKDTRNTVPVAATGAVNDVTNQKSSQIDNTISSAQEGVQFGSATVGPTSDNQSNPVGTFSDGLASALAARANKMRAESADDDDNDDGDDDDDW.

A disordered region spans residues 1-20 (MAVIKKGARRKDVKEPKKRS). The Myosin motor domain maps to 36–715 (VGVSDLTLLS…SLFALEDMRD (680 aa)). ATP is bound at residue 129 to 136 (GESGAGKT). Ser-357 is subject to Phosphoserine. The actin-binding stretch occupies residues 404-486 (SIGILDIYGF…PGILAAMNDS (83 aa)). IQ domains are found at residues 719–739 (YNMA…RIDA) and 740–765 (AIKI…YGTK). Residues 771-961 (KERRSMSLLG…TIYVRRGHPA (191 aa)) enclose the TH1 domain. Disordered regions lie at residues 951–1015 (STIY…QKPV), 1029–1136 (YNPK…GSSS), and 1215–1270 (VQFG…DDDW). Over residues 980 to 1000 (IKSKKSKHKSTHKHTHSHRSH) the composition is skewed to basic residues. A compositionally biased stretch (low complexity) spans 1066-1078 (KKASSSHKSSSAK). Basic and acidic residues predominate over residues 1089 to 1098 (GVEKNKEPLK). Over residues 1107-1116 (PIPPPPPPMG) the composition is skewed to pro residues. An SH3 domain is found at 1118–1180 (PKDPKFEAAY…PTAYMTPYKD (63 aa)). Over residues 1215-1234 (VQFGSATVGPTSDNQSNPVG) the composition is skewed to polar residues. Over residues 1256 to 1270 (ADDDDNDDGDDDDDW) the composition is skewed to acidic residues.

Belongs to the TRAFAC class myosin-kinesin ATPase superfamily. Myosin family. Interacts (via myosin motor domain) with SHE4; this interaction is important for proper localization and may regulate the interaction of the motor domain with actin. Interacts (via SH3 domain) with VRP1; this interaction is required for localization to sites of polarized growth and may regulate the interaction of the tail domain with actin. Interacts (via SH3 domain) with PAN1; this interaction is important for late stages of endocytopsis. Interacts (via SH3 domain) with BBC1 and LAS17. Interacts (via C-terminal acidic tail) with ARC19 and ARC40; ARC19 and ARC40 are Arp2/3 complex subunits. Post-translationally, phosphorylation of the TEDS site (Ser-357) is required for the polarization of the actin cytoskeleton and for ligand-induced, but not for constitutive internalization of STE2. Phosphorylation probably activates the myosin-I ATPase. Ser-357 is phosphorylated by CLA4 and STE20 in vitro.

The protein resides in the cytoplasm. It localises to the cytoskeleton. Its subcellular location is the actin patch. Functionally, one of two redundant type-I myosins implicated in the organization of the actin cytoskeleton. Required for proper actin cytoskeleton polarization and for the internalization step in endocytosis. At the cell cortex, assembles in patch-like structures together with proteins from the actin-polymerizing machinery and promotes actin assembly. Functions redundantly with LAS17 as actin nucleation-promoting factor (NPF) for the Arp2/3 complex. Motor domain phosphorylation by PAK kinases CLA4 and STE20 promotes CDC42-regulated actin assembly. Functions together with the NPF PAN1 in late stages of endocytosis. Motor domain phosphorylation by PDK1 kinases PKH1 and PKH2, and by SGK kinases YPK1 and YPK2, promotes ligand-induced, but not constitutive endocytosis of the G protein-coupled receptor STE2. This Saccharomyces cerevisiae (strain YJM789) (Baker's yeast) protein is Myosin-3 (MYO3).